The sequence spans 239 residues: Mannose-binding protein A (239 aa).

Positions 1 to 18 (MLLLPLLPVLLCVVSVSS) are cleaved as a signal peptide. The segment at 35 to 88 (ACGRDGRDGPKGEKGEPGQGLRGLQGPPGKLGPPGSVGSPGSPGPKGQKGDHGD) is disordered. Residues 37 to 89 (GRDGRDGPKGEKGEPGQGLRGLQGPPGKLGPPGSVGSPGSPGPKGQKGDHGDN) enclose the Collagen-like domain. The span at 38–50 (RDGRDGPKGEKGE) shows a compositional bias: basic and acidic residues. Pro44 carries the 4-hydroxyproline modification. 2 positions are modified to 5-hydroxylysine: Lys45 and Lys48. 2 O-linked (Gal...) hydroxylysine glycosylation sites follow: Lys45 and Lys48. 5 positions are modified to 4-hydroxyproline: Pro51, Pro62, Pro68, Pro74, and Pro79. Residues 58-74 (LQGPPGKLGPPGSVGSP) show a composition bias toward low complexity. 2 positions are modified to 5-hydroxylysine: Lys80 and Lys83. Residues Lys80 and Lys83 are each glycosylated (O-linked (Gal...) hydroxylysine). The C-type lectin domain occupies 144-239 (SLCTELQGTV…SFKAVCEFPA (96 aa)). 2 disulfide bridges follow: Cys146/Cys235 and Cys213/Cys227. Residues Asp179, Glu183, Glu203, Asn205, Glu211, Asp212, Asn223, and Asp224 each coordinate Ca(2+). The calcium-dependent carbohydrate binding stretch occupies residues 203–211 (EPNNHGSGE).

In terms of assembly, homotrimer. Forms higher oligomeric complexes formed by the association of two, three or more homotrimers. Oligomerization occurs in the endoplasmic reticulum. Interacts with MASP1 and MASP2. In terms of processing, hydroxylated on lysine and proline residues within the collagen-like domain. Post-translationally, O-glycosylated. O-linked glycans on hydroxylysine residues consist of Glc-Gal disaccharides bound to the oxygen atom of post-translationally added hydroxyl groups. As to expression, detected in liver and blood serum (at protein level). Detected in liver.

The protein localises to the secreted. In terms of biological role, calcium-dependent lectin. Plays a role in the innate immune response by binding mannose, fucose and N-acetylglucosamine moieties on different microorganisms and mediating activation of the lectin complement pathway. Binds to late apoptotic cells, as well as to apoptotic blebs and to necrotic cells, but not to early apoptotic cells, facilitating their uptake by macrophages. This chain is Mannose-binding protein A (Mbl1), found in Mus musculus (Mouse).